A 426-amino-acid chain; its full sequence is Anaerobic glycerol-3-phosphate dehydrogenase subunit B (426 aa).

The protein belongs to the anaerobic G-3-P dehydrogenase subunit B family. Composed of a catalytic GlpA/B dimer and of membrane bound GlpC. FMN serves as cofactor.

It carries out the reaction a quinone + sn-glycerol 3-phosphate = dihydroxyacetone phosphate + a quinol. It functions in the pathway polyol metabolism; glycerol degradation via glycerol kinase pathway; glycerone phosphate from sn-glycerol 3-phosphate (anaerobic route): step 1/1. In terms of biological role, conversion of glycerol 3-phosphate to dihydroxyacetone. Uses fumarate or nitrate as electron acceptor. This Haemophilus ducreyi (strain 35000HP / ATCC 700724) protein is Anaerobic glycerol-3-phosphate dehydrogenase subunit B.